The primary structure comprises 152 residues: Transcriptional repressor NrdR (152 aa).

A zinc finger spans residues 3–34; the sequence is CPFCNHGELKVIDSRNSPEANAIKRRRECLRC. One can recognise an ATP-cone domain in the interval 48-138; it reads IQVLKRDGRY…VYRRFRDVGE (91 aa).

This sequence belongs to the NrdR family. Zn(2+) serves as cofactor.

Functionally, negatively regulates transcription of bacterial ribonucleotide reductase nrd genes and operons by binding to NrdR-boxes. The sequence is that of Transcriptional repressor NrdR from Chlamydia muridarum (strain MoPn / Nigg).